The chain runs to 313 residues: Small ribosomal subunit protein uS2 (313 aa).

A compositionally biased stretch (basic and acidic residues) spans 228-256 (RQEDKAAEAQDKDAQDTEDNKGARPRGAE). The disordered stretch occupies residues 228-313 (RQEDKAAEAQ…VSKAGDKPKK (86 aa)).

The protein belongs to the universal ribosomal protein uS2 family.

The chain is Small ribosomal subunit protein uS2 from Amoebophilus asiaticus (strain 5a2).